A 921-amino-acid chain; its full sequence is Protein translocase subunit SecA (921 aa).

Residues Gln87, 105 to 109 (GEGKT), and Asp515 contribute to the ATP site. The segment at 872–901 (DMEVAGSTGDRGAALDIQPAPVRSGPKIGR) is disordered. Positions 905, 907, 916, and 917 each coordinate Zn(2+).

This sequence belongs to the SecA family. As to quaternary structure, monomer and homodimer. Part of the essential Sec protein translocation apparatus which comprises SecA, SecYEG and auxiliary proteins SecDF-YajC and YidC. The cofactor is Zn(2+).

The protein localises to the cell inner membrane. The protein resides in the cytoplasm. The catalysed reaction is ATP + H2O + cellular proteinSide 1 = ADP + phosphate + cellular proteinSide 2.. In terms of biological role, part of the Sec protein translocase complex. Interacts with the SecYEG preprotein conducting channel. Has a central role in coupling the hydrolysis of ATP to the transfer of proteins into and across the cell membrane, serving both as a receptor for the preprotein-SecB complex and as an ATP-driven molecular motor driving the stepwise translocation of polypeptide chains across the membrane. This chain is Protein translocase subunit SecA, found in Polynucleobacter asymbioticus (strain DSM 18221 / CIP 109841 / QLW-P1DMWA-1) (Polynucleobacter necessarius subsp. asymbioticus).